Here is a 358-residue protein sequence, read N- to C-terminus: Probable translocation protein Y4yK (358 aa).

The protein belongs to the FliN/MopA/SpaO family.

In terms of biological role, could be involved in the secretion of an unknown factor. This chain is Probable translocation protein Y4yK, found in Sinorhizobium fredii (strain NBRC 101917 / NGR234).